The chain runs to 473 residues: Sun domain-containing protein 1 (473 aa).

The tract at residues 1–47 (MALRHTISPQFSNRHSPPVTRSVSRTGVHQPLDTSTPVTRRDSQPGT) is disordered. A compositionally biased stretch (polar residues) spans 7-47 (ISPQFSNRHSPPVTRSVSRTGVHQPLDTSTPVTRRDSQPGT). 2 coiled-coil regions span residues 163–191 (ISNL…LENV) and 204–235 (EELK…STKI). The segment at 237–257 (HSTPEKAPETAPTASLPPSSQ) is disordered. Positions 248–257 (PTASLPPSSQ) are enriched in polar residues. The chain crosses the membrane as a helical span at residues 262 to 282 (HITRRALLGVNVANSLIGASI). Residues 279 to 443 (GASIDHSCSS…YLIRVYGEPV (165 aa)) form the SUN domain. Positions 443–473 (VDPPKETQPMTDNGTESKLESAIVNSVSETA) are disordered.

It localises to the nucleus membrane. Its subcellular location is the nucleus envelope. Involved in centrosome attachment to the nucleus. Required for zyg-12 localization to the nuclear envelope. Together with pot-1, it is required to anchor telomeres to the nuclear envelope in embryos. In Caenorhabditis elegans, this protein is Sun domain-containing protein 1.